A 557-amino-acid chain; its full sequence is Copine-6 (557 aa).

C2 domains lie at 1–127 (MSDP…TKPL) and 134–263 (NAGK…MQWD). The Ca(2+) site is built by Asp167, Asp173, Asp229, Asp231, and Asp237. Positions 244–303 (STFQEMQEGTANPGQEMQWDCINPKYRDKKKHYKSSGTVVLAQCTVEKVHTFLDYIMGGC) are linker region. One can recognise a VWFA domain in the interval 306-526 (SFTVAIDFTA…ALAKCVLAEV (221 aa)).

The protein belongs to the copine family. As to quaternary structure, interacts (via second C2 domain) with OS9 (via C-terminus); this interaction occurs in a calcium-dependent manner in vitro. May interact with NECAB1. Ca(2+) serves as cofactor.

The protein resides in the cytoplasm. It is found in the cell membrane. It localises to the endosome. The protein localises to the cytoplasmic vesicle. Its subcellular location is the clathrin-coated vesicle. The protein resides in the perikaryon. It is found in the cell projection. It localises to the dendrite. Functionally, calcium-dependent phospholipid-binding protein that plays a role in calcium-mediated intracellular processes. Binds phospholipid membranes in a calcium-dependent manner. Plays a role in dendrite formation by melanocytes. This is Copine-6 from Bos taurus (Bovine).